A 1350-amino-acid chain; its full sequence is Tectonin beta-propeller repeat-containing protein (1350 aa).

TECPR repeat units lie at residues 23–59 (GAWR…VHVH), 233–271 (LRWT…VRTG), 280–320 (DSWL…FRRG), and 336–371 (KGWV…HRSG). The span at 396 to 415 (SSLSIVSRKSGGSSSTPGSK) shows a compositional bias: low complexity. 2 disordered regions span residues 396–420 (SSLS…QSFS) and 671–691 (SGSG…SGTF). The region spanning 816 to 955 (YYNTLYNGMP…RIKLFNVLYR (140 aa)) is the Galectin domain. TECPR repeat units lie at residues 966–1000 (MHWR…VYNG), 1187–1223 (DAWE…FRYG), 1232–1269 (DAWQ…VRKE), and 1278–1322 (SHWQ…RRCG).

This sequence belongs to the TECPR1 family.

Functionally, involved in peroxisome biogenesis. This Drosophila melanogaster (Fruit fly) protein is Tectonin beta-propeller repeat-containing protein (Pex23).